The sequence spans 176 residues: Cathelicidin-2 (176 aa).

A signal peptide spans 1–29 (METQRASLSLGRCSLWLLLLGLVLPSASA). Pyrrolidone carboxylic acid is present on glutamine 30. A propeptide spanning residues 30–130 (QALSYREAVL…DINCNELQSV (101 aa)) is cleaved from the precursor. 2 disulfides stabilise this stretch: cysteine 85/cysteine 96 and cysteine 107/cysteine 124. A disordered region spans residues 157–176 (IFPPIRPPFRPPLGPFPGRR). Proline amide is present on proline 173. Residues 174–176 (GRR) constitute a propeptide, removed in mature form.

It belongs to the cathelicidin family. Elastase is responsible for its maturation. As to expression, large granules of neutrophils.

Its subcellular location is the secreted. In terms of biological role, exerts, in vitro, a potent antimicrobial activity. Probably due to an impairment of the function of the respiratory chain and of energy-dependent activities in the inner membrane of susceptible microorganisms. The chain is Cathelicidin-2 (CATHL2) from Bos taurus (Bovine).